Consider the following 465-residue polypeptide: Phosphomethylpyrimidine synthase (465 aa).

Substrate is bound by residues Asn80, Met109, Tyr139, His175, 195 to 197 (SRG), 236 to 239 (DSLR), and Glu275. His279 provides a ligand contact to Zn(2+). Tyr302 is a substrate binding site. His343 serves as a coordination point for Zn(2+). [4Fe-4S] cluster contacts are provided by Cys423, Cys426, and Cys431.

The protein belongs to the ThiC family. [4Fe-4S] cluster is required as a cofactor.

The catalysed reaction is 5-amino-1-(5-phospho-beta-D-ribosyl)imidazole + S-adenosyl-L-methionine = 4-amino-2-methyl-5-(phosphooxymethyl)pyrimidine + CO + 5'-deoxyadenosine + formate + L-methionine + 3 H(+). The protein operates within cofactor biosynthesis; thiamine diphosphate biosynthesis. Catalyzes the synthesis of the hydroxymethylpyrimidine phosphate (HMP-P) moiety of thiamine from aminoimidazole ribotide (AIR) in a radical S-adenosyl-L-methionine (SAM)-dependent reaction. In Synechococcus sp. (strain CC9311), this protein is Phosphomethylpyrimidine synthase.